We begin with the raw amino-acid sequence, 886 residues long: DNA mismatch repair protein MutS (886 aa).

An ATP-binding site is contributed by 626 to 633; that stretch reads GPNMGGKS.

The protein belongs to the DNA mismatch repair MutS family.

In terms of biological role, this protein is involved in the repair of mismatches in DNA. It is possible that it carries out the mismatch recognition step. This protein has a weak ATPase activity. This is DNA mismatch repair protein MutS from Burkholderia ambifaria (strain ATCC BAA-244 / DSM 16087 / CCUG 44356 / LMG 19182 / AMMD) (Burkholderia cepacia (strain AMMD)).